The sequence spans 141 residues: Nucleoside diphosphate kinase (141 aa).

6 residues coordinate ATP: Lys11, Phe59, Arg87, Thr93, Arg104, and Asn114. His117 (pros-phosphohistidine intermediate) is an active-site residue.

The protein belongs to the NDK family. As to quaternary structure, homotetramer. The cofactor is Mg(2+).

The protein resides in the cytoplasm. It catalyses the reaction a 2'-deoxyribonucleoside 5'-diphosphate + ATP = a 2'-deoxyribonucleoside 5'-triphosphate + ADP. The catalysed reaction is a ribonucleoside 5'-diphosphate + ATP = a ribonucleoside 5'-triphosphate + ADP. Functionally, major role in the synthesis of nucleoside triphosphates other than ATP. The ATP gamma phosphate is transferred to the NDP beta phosphate via a ping-pong mechanism, using a phosphorylated active-site intermediate. This Pseudomonas fluorescens (strain SBW25) protein is Nucleoside diphosphate kinase.